The primary structure comprises 852 residues: Polyphosphate kinase (852 aa).

Disordered regions lie at residues 1–36 (MATG…DRPI) and 58–82 (SHDP…SRRK). Over residues 20 to 36 (VARDHPGCGPHRLDRPI) the composition is skewed to basic and acidic residues. A compositionally biased stretch (polar residues) spans 58–67 (SHDPAPSQSV). N131 lines the ATP pocket. The interval 251 to 303 (GDEIGPQRTPPPSDSLDNRVPSNLKRNSDTANQQPTPAENISAPEDGAEQTEP) is disordered. Residues 258–303 (RTPPPSDSLDNRVPSNLKRNSDTANQQPTPAENISAPEDGAEQTEP) are insert. Residues 270-289 (VPSNLKRNSDTANQQPTPAE) are compositionally biased toward polar residues. Mg(2+) is bound by residues R524 and R554. Residue H584 is the Phosphohistidine intermediate of the active site. Y617, R713, and H741 together coordinate ATP.

Belongs to the polyphosphate kinase 1 (PPK1) family. The cofactor is Mg(2+). Post-translationally, an intermediate of this reaction is the autophosphorylated ppk in which a phosphate is covalently linked to a histidine residue through a N-P bond.

The enzyme catalyses [phosphate](n) + ATP = [phosphate](n+1) + ADP. Its function is as follows. Catalyzes the reversible transfer of the terminal phosphate of ATP to form a long-chain polyphosphate (polyP). The protein is Polyphosphate kinase of Rhodopirellula baltica (strain DSM 10527 / NCIMB 13988 / SH1).